A 438-amino-acid polypeptide reads, in one-letter code: (3,5-dihydroxyphenyl)acetyl-CoA 1,2-dioxygenase (438 aa).

Substrate contacts are provided by residues Asp-183, Glu-189, His-222–Tyr-225, Ala-233–Lys-238, Gly-296, Ile-325–Gly-327, and Gln-416.

This sequence belongs to the enoyl-CoA hydratase/isomerase family. Homohexamer; dimer of trimers.

The enzyme catalyses (3,5-dihydroxyphenyl)acetyl-CoA + O2 = 2-(3,5-dihydroxyphenyl)-2-oxoacetate + CoA + H(+). Inhibited by DPA-S-(N-acetylcysteamine). Involved in the biosynthesis of the nonproteinogenic amino acid monomer (S)-3,5-dihydroxyphenylglycine (Dpg) responsible of the production of vancomycin and teicoplanin antibiotics. Catalyzes the unusual conversion 3,5-dihydroxyphenylacetyl-CoA (DPA-CoA) to 3,5-dihydroxyphenylglyoxylate. DpgC performed a net four-electron oxidation of the benzylic carbon of DPA-CoA and the hydrolysis of the thioester bond to generate free CoA. DpgC has the ability to process a diverse range of substituted phenylacetyl-CoA substrates. This Streptomyces toyocaensis protein is (3,5-dihydroxyphenyl)acetyl-CoA 1,2-dioxygenase.